Here is a 1070-residue protein sequence, read N- to C-terminus: DNA-directed RNA polymerase subunit beta (1070 aa).

Belongs to the RNA polymerase beta chain family. As to quaternary structure, in plastids the minimal PEP RNA polymerase catalytic core is composed of four subunits: alpha, beta, beta', and beta''. When a (nuclear-encoded) sigma factor is associated with the core the holoenzyme is formed, which can initiate transcription.

The protein localises to the plastid. It is found in the chloroplast. The catalysed reaction is RNA(n) + a ribonucleoside 5'-triphosphate = RNA(n+1) + diphosphate. Functionally, DNA-dependent RNA polymerase catalyzes the transcription of DNA into RNA using the four ribonucleoside triphosphates as substrates. The sequence is that of DNA-directed RNA polymerase subunit beta from Solanum bulbocastanum (Wild potato).